Reading from the N-terminus, the 233-residue chain is Ras-related protein RabV (233 aa).

15–22 contacts GTP; sequence GEKEVGKS. Residues 37 to 45 carry the Effector region motif; the sequence is YIPTIGIDF. GTP-binding positions include 63 to 67 and 122 to 125; these read DYVSH and TKSD. The tract at residues 143-182 is disordered; it reads QNNNNNNNNNNNNNNNNNNNNNNNNNNNNNSNNNNNNNLQ. Positions 144 to 180 are enriched in low complexity; that stretch reads NNNNNNNNNNNNNNNNNNNNNNNNNNNNNSNNNNNNN.

The protein belongs to the small GTPase superfamily. Rab family.

This Dictyostelium discoideum (Social amoeba) protein is Ras-related protein RabV (rabV).